Reading from the N-terminus, the 118-residue chain is Mating-type P-specific polypeptide Pc (118 aa).

The segment at residues 29 to 97 is a DNA-binding region (HMG box); that stretch reads KTTIYKNGFM…VRKQIAKLER (69 aa).

The protein resides in the nucleus. Its function is as follows. Mating type proteins are sequence specific DNA-binding proteins that act as master switches in yeast differentiation by controlling gene expression in a cell type-specific fashion. Required for conjugation and efficient meiosis. The chain is Mating-type P-specific polypeptide Pc (matPc) from Schizosaccharomyces kambucha (Fission yeast).